Reading from the N-terminus, the 1102-residue chain is DNA-directed RNA polymerase subunit beta (1102 aa).

Residues 1081 to 1102 (LPGKRTPSRPIYESLSTEGNQD) are disordered.

This sequence belongs to the RNA polymerase beta chain family. As to quaternary structure, in cyanobacteria the RNAP catalytic core is composed of 2 alpha, 1 beta, 1 beta', 1 gamma and 1 omega subunit. When a sigma factor is associated with the core the holoenzyme is formed, which can initiate transcription.

It carries out the reaction RNA(n) + a ribonucleoside 5'-triphosphate = RNA(n+1) + diphosphate. Functionally, DNA-dependent RNA polymerase catalyzes the transcription of DNA into RNA using the four ribonucleoside triphosphates as substrates. The polypeptide is DNA-directed RNA polymerase subunit beta (Trichodesmium erythraeum (strain IMS101)).